The primary structure comprises 344 residues: Heme A synthase (344 aa).

A run of 9 helical transmembrane segments spans residues 20–40 (IAWW…VGGL), 104–124 (RFLG…FVVT), 135–155 (LIFL…MVMS), 170–190 (AHLG…LDLL), 205–225 (AAAI…VAGI), 233–253 (TWPL…TPVW), 265–285 (FQHR…WWAA), 296–316 (WLAV…LWVV), and 317–337 (PIPL…VAVW). H267 serves as a coordination point for heme. Heme is bound at residue H324.

Belongs to the COX15/CtaA family. Type 2 subfamily. In terms of assembly, interacts with CtaB. Heme b is required as a cofactor.

The protein resides in the cell membrane. It carries out the reaction Fe(II)-heme o + 2 A + H2O = Fe(II)-heme a + 2 AH2. It participates in porphyrin-containing compound metabolism; heme A biosynthesis; heme A from heme O: step 1/1. Functionally, catalyzes the conversion of heme O to heme A by two successive hydroxylations of the methyl group at C8. The first hydroxylation forms heme I, the second hydroxylation results in an unstable dihydroxymethyl group, which spontaneously dehydrates, resulting in the formyl group of heme A. This is Heme A synthase from Parvibaculum lavamentivorans (strain DS-1 / DSM 13023 / NCIMB 13966).